We begin with the raw amino-acid sequence, 301 residues long: MKIAILSTKQELSSTQRLKEAALARGHKVKIINTLRCYMSLSQEKPTIHYMGKELARYDAVIPRIGASITFYGTAVVRQFEMMGTFCLNSSMSITRSRDKFRSLQFLSRKGIDLPITGFAHSPDDIEDLIQMVGGTPLIIKLIEGTQGIGVVLAETKKAAESVIQAFLGLKVNILIQEFIGETQGRDIRCFVIGNKVVATMQREARPGDFRSNVHRGGTTKLIKITPQEREISINAAKALGLNVAGVDLLRSKRGPLVLEVNSSPGLEGIENITKKDIAGMIIEFIEKNAKPIKAYSRYQG.

Residues 104–287 enclose the ATP-grasp domain; it reads LQFLSRKGID…IAGMIIEFIE (184 aa). ATP contacts are provided by residues K141, 178 to 179, D187, and 211 to 213; these read EF and RSN. Mg(2+) is bound by residues D248, E260, and N262. Mn(2+)-binding residues include D248, E260, and N262.

It belongs to the RimK family. Mg(2+) is required as a cofactor. Requires Mn(2+) as cofactor.

This Coxiella burnetii (strain CbuK_Q154) (Coxiella burnetii (strain Q154)) protein is Probable alpha-L-glutamate ligase.